Here is a 628-residue protein sequence, read N- to C-terminus: Venom redulysin 1 (628 aa).

Residues 1–19 form the signal peptide; it reads MSKLWLLLLLVAAFQAVHS. The propeptide occupies 20–368; that stretch reads YPAAESDYLE…EDDVAESDEE (349 aa). Residues 290–313 are disordered; that stretch reads DYEEEEEEEEEEEFELEEDYEEDP. A compositionally biased stretch (acidic residues) spans 291–313; it reads YEEEEEEEEEEEFELEEDYEEDP.

The protein belongs to the redulysin-like family. Contains 5 disulfide bonds. As to expression, expressed by the venom gland (posterior main gland) (at protein level).

It is found in the secreted. Its function is as follows. Highly abundant protein that may be responsible for the observed disruption of sensory neuron membranes, since it is homologous to proteins such as trialysin, which forms pores in lipid bilayers. Probable insecticidal toxin. This chain is Venom redulysin 1, found in Platymeris rhadamanthus (Red spot assassin bug).